The sequence spans 308 residues: Putative T-box protein 30/42 (308 aa).

A DNA-binding region (T-box) is located at residues 11–192 (MSNEELWKER…KHSTFGNRSE (182 aa)). Residues 186–220 (TFGNRSEGGIKRKTSDAAGQLPSKRSSKKPVKKDV) are disordered.

Its subcellular location is the nucleus. In terms of biological role, involved in the regulatory network to control embryonic patterning and morphogenesis. Implicated in negatively regulating vab-7 expression at the anterior of embryos. The sequence is that of Putative T-box protein 30/42 (tbx-30) from Caenorhabditis elegans.